A 507-amino-acid chain; its full sequence is Hippocampus abundant transcript-like protein 1 (507 aa).

Residues 1 to 22 (MSTDGESPEEPGWKAVASPKAS) are disordered. Residues 1-51 (MSTDGESPEEPGWKAVASPKASAMPEKRGSAQAASSSWLQGFGQPSVYHAA) are Extracellular-facing. A helical transmembrane segment spans residues 52–72 (FVIFFEFFAWGLLTTPMLTVL). Over 73–84 (HETFPQHTFLMN) the chain is Cytoplasmic. The helical transmembrane segment at 85–105 (GLIQGVKGLLSFLSAPLIGAL) threads the bilayer. At 106 to 113 (SDVWGRKP) the chain is on the extracellular side. The helical transmembrane segment at 114 to 134 (FLLGTVFFTCFPIPLMRISPW) threads the bilayer. The Cytoplasmic portion of the chain corresponds to 135-136 (WY). The chain crosses the membrane as a helical span at residues 137–157 (FGMISVSGVFSVTFSVIFAYV). Residues 158–170 (ADFTQEHERSTAY) are Extracellular-facing. Residues 171 to 191 (GWVSATFAASLVSSPAIGTYL) traverse the membrane as a helical segment. At 192-198 (SSNYGDS) the chain is on the cytoplasmic side. A helical transmembrane segment spans residues 199–219 (LVVLVATVVALLDICFILVAV). Over 220-257 (PESLPEKIRPASWGAQISWKQADPFASLKKVGKDSTVL) the chain is Extracellular. The helical transmembrane segment at 258–278 (LICITVFLSYLPEAGQYSSFF) threads the bilayer. The Cytoplasmic portion of the chain corresponds to 279 to 283 (LYLRQ). Residues 284–304 (VIGFGSVKIVAFIAMVGILSI) traverse the membrane as a helical segment. Over 305-323 (LAQTVFLSKLMRSLGNKNT) the chain is Extracellular. A helical membrane pass occupies residues 324 to 344 (VLLGLGFQILQLAWYGFGAQA). At 345–347 (WMM) the chain is on the cytoplasmic side. The helical transmembrane segment at 348-368 (WAAGTVAAMSSITFPAVSALI) threads the bilayer. At 369 to 389 (SRNAESDQQGVAQGIITGIRG) the chain is on the extracellular side. The helical transmembrane segment at 390 to 410 (LCNGLGPALYGFIFYLFHVEL) threads the bilayer. Over 411-430 (NELGPKLDSDNDPLQGAFIP) the chain is Cytoplasmic. The chain crosses the membrane as a helical span at residues 431-451 (GPPFLFGACIVLMSFLVALFI). Over 452–507 (PEYRKTGGVQKHNNSISGSLSTPPERGSDEDIEPLLQDSNIWELSSEEPGNQCTEL) the chain is Extracellular. The span at 462–473 (KHNNSISGSLST) shows a compositional bias: polar residues. The interval 462 to 483 (KHNNSISGSLSTPPERGSDEDI) is disordered. Asparagine 464 carries N-linked (GlcNAc...) asparagine glycosylation.

Belongs to the major facilitator superfamily.

Its subcellular location is the membrane. The sequence is that of Hippocampus abundant transcript-like protein 1 from Rattus norvegicus (Rat).